The primary structure comprises 74 residues: UPF0291 protein EF_0064 (74 aa).

The tract at residues 53-74 (YDPTGEDVTPEKLKEEQQKYFD) is disordered. Basic and acidic residues predominate over residues 61-74 (TPEKLKEEQQKYFD).

This sequence belongs to the UPF0291 family.

It is found in the cytoplasm. This is UPF0291 protein EF_0064 from Enterococcus faecalis (strain ATCC 700802 / V583).